The following is a 129-amino-acid chain: Large ribosomal subunit protein bL12 (129 aa).

Belongs to the bacterial ribosomal protein bL12 family. In terms of assembly, homodimer. Part of the ribosomal stalk of the 50S ribosomal subunit. Forms a multimeric L10(L12)X complex, where L10 forms an elongated spine to which 2 to 4 L12 dimers bind in a sequential fashion. Binds GTP-bound translation factors.

Functionally, forms part of the ribosomal stalk which helps the ribosome interact with GTP-bound translation factors. Is thus essential for accurate translation. The sequence is that of Large ribosomal subunit protein bL12 from Photobacterium profundum (strain SS9).